A 302-amino-acid polypeptide reads, in one-letter code: Sushi domain-containing protein 6 (302 aa).

The N-terminal stretch at 1–39 is a signal peptide; sequence MCHGKIAPKSSSEFVVTSVGHGVFLQLVILCALLGDGLA. A Sushi domain is found at 40–104; sequence SVCPLPPEPE…TPAMEVSCHL (65 aa). 2 disulfide bridges follow: Cys-42-Cys-89 and Cys-74-Cys-102. A helical transmembrane segment spans residues 120 to 140; the sequence is IVASTASSVALILLLVVLFVL. Disordered regions lie at residues 202-241 and 256-302; these read GSAP…CEAW and TSSW…LKEA. 3 stretches are compositionally biased toward polar residues: residues 212 to 222, 256 to 267, and 279 to 290; these read REQQLQGQEAC, TSSWVAGSGSSR, and SDIQSLLSLTSE.

It localises to the membrane. Functionally, may play a role in growth-suppressive activity and cell death. May be involved in the production of chemokine molecules in umbilical vein endothelial cells (HUVECs) cultured in THP1 monocyte LPS-induced medium. Plays a role in preventing tumor onset. In Mus musculus (Mouse), this protein is Sushi domain-containing protein 6.